The primary structure comprises 185 residues: DNA-directed RNA polymerase 22 kDa subunit (185 aa).

The protein belongs to the poxviridae DNA-directed RNA polymerase 22 kDa subunit family. In terms of assembly, the DNA-dependent RNA polymerase used for intermediate and late genes expression consists of eight subunits Rpo30/OPG66, Rpo7/OPG90, Rpo22/OPG103, Rpo147/OPG105, Rpo18/OPG119, Rpo19/OPG131, Rpo132/OPG151 and Rpo35/OPG156. The same holoenzyme, with the addition of the transcription-specificity factor OPG109, is used for early gene expression.

The protein resides in the virion. The enzyme catalyses RNA(n) + a ribonucleoside 5'-triphosphate = RNA(n+1) + diphosphate. In terms of biological role, part of the DNA-dependent RNA polymerase which catalyzes the transcription of viral DNA into RNA using the four ribonucleoside triphosphates as substrates. Responsible for the transcription of early, intermediate and late genes. DNA-dependent RNA polymerase associates with the early transcription factor (ETF), itself composed of OPG118 and OPG133, thereby allowing the early genes transcription. Late transcription, and probably also intermediate transcription, require newly synthesized RNA polymerase. This is DNA-directed RNA polymerase 22 kDa subunit (OPG103) from Cynomys gunnisoni (Gunnison's prairie dog).